The following is a 325-amino-acid chain: Release factor glutamine methyltransferase (325 aa).

Residues Gly-141 to Gly-145, Asp-164, Trp-193, and Asn-207 contribute to the S-adenosyl-L-methionine site. Asn-207–Tyr-210 is a substrate binding site. Residues Leu-306–Ala-325 form a disordered region.

It belongs to the protein N5-glutamine methyltransferase family. PrmC subfamily.

It catalyses the reaction L-glutaminyl-[peptide chain release factor] + S-adenosyl-L-methionine = N(5)-methyl-L-glutaminyl-[peptide chain release factor] + S-adenosyl-L-homocysteine + H(+). In terms of biological role, methylates the class 1 translation termination release factors RF1/PrfA and RF2/PrfB on the glutamine residue of the universally conserved GGQ motif. This chain is Release factor glutamine methyltransferase, found in Rhodospirillum rubrum (strain ATCC 11170 / ATH 1.1.1 / DSM 467 / LMG 4362 / NCIMB 8255 / S1).